A 218-amino-acid polypeptide reads, in one-letter code: Ribose-5-phosphate isomerase A (218 aa).

Substrate is bound by residues 28–31, 81–84, and 94–97; these read TGST, DGAD, and KGGG. The active-site Proton acceptor is the Glu103. Lys121 lines the substrate pocket.

It belongs to the ribose 5-phosphate isomerase family. In terms of assembly, homodimer.

It carries out the reaction aldehydo-D-ribose 5-phosphate = D-ribulose 5-phosphate. It participates in carbohydrate degradation; pentose phosphate pathway; D-ribose 5-phosphate from D-ribulose 5-phosphate (non-oxidative stage): step 1/1. Catalyzes the reversible conversion of ribose-5-phosphate to ribulose 5-phosphate. This Sodalis glossinidius (strain morsitans) protein is Ribose-5-phosphate isomerase A.